A 294-amino-acid polypeptide reads, in one-letter code: Ribosomal protein L11 methyltransferase (294 aa).

Positions 146, 167, 189, and 231 each coordinate S-adenosyl-L-methionine.

The protein belongs to the methyltransferase superfamily. PrmA family.

It is found in the cytoplasm. It carries out the reaction L-lysyl-[protein] + 3 S-adenosyl-L-methionine = N(6),N(6),N(6)-trimethyl-L-lysyl-[protein] + 3 S-adenosyl-L-homocysteine + 3 H(+). Methylates ribosomal protein L11. In Photobacterium profundum (strain SS9), this protein is Ribosomal protein L11 methyltransferase.